Consider the following 500-residue polypeptide: Signal transduction histidine-protein kinase/phosphatase UhpB (500 aa).

A run of 8 helical transmembrane segments spans residues leucine 8–isoleucine 28, valine 78–alanine 98, leucine 112–glycine 132, alanine 140–histidine 160, histidine 185–alanine 205, leucine 207–tryptophan 224, alanine 231–histidine 249, and valine 253–isoleucine 273. Residues glutamine 274–valine 500 lie on the Cytoplasmic side of the membrane. In terms of domain architecture, Histidine kinase spans glutamate 311–tyrosine 499. Histidine 313 is subject to Phosphohistidine; by autocatalysis.

In terms of processing, autophosphorylated.

Its subcellular location is the cell inner membrane. The catalysed reaction is ATP + protein L-histidine = ADP + protein N-phospho-L-histidine.. Part of the UhpABC signaling cascade that controls the expression of the hexose phosphate transporter UhpT. UhpB functions as a membrane-associated protein kinase that autophosphorylates in response to interaction with UhpC, and subsequently transfers its phosphate group to the response regulator UhpA. Can also dephosphorylate UhpA. The polypeptide is Signal transduction histidine-protein kinase/phosphatase UhpB (uhpB) (Salmonella typhimurium (strain LT2 / SGSC1412 / ATCC 700720)).